The sequence spans 166 residues: NAD(P)H-quinone oxidoreductase subunit I, chloroplastic (166 aa).

4Fe-4S ferredoxin-type domains lie at 55 to 84 (GRIH…VDWK) and 95 to 124 (LNYS…MTEE). 8 residues coordinate [4Fe-4S] cluster: C64, C67, C70, C74, C104, C107, C110, and C114.

It belongs to the complex I 23 kDa subunit family. NDH is composed of at least 16 different subunits, 5 of which are encoded in the nucleus. Requires [4Fe-4S] cluster as cofactor.

It is found in the plastid. The protein localises to the chloroplast thylakoid membrane. It catalyses the reaction a plastoquinone + NADH + (n+1) H(+)(in) = a plastoquinol + NAD(+) + n H(+)(out). The catalysed reaction is a plastoquinone + NADPH + (n+1) H(+)(in) = a plastoquinol + NADP(+) + n H(+)(out). NDH shuttles electrons from NAD(P)H:plastoquinone, via FMN and iron-sulfur (Fe-S) centers, to quinones in the photosynthetic chain and possibly in a chloroplast respiratory chain. The immediate electron acceptor for the enzyme in this species is believed to be plastoquinone. Couples the redox reaction to proton translocation, and thus conserves the redox energy in a proton gradient. This is NAD(P)H-quinone oxidoreductase subunit I, chloroplastic from Silphium perfoliatum (Cup plant).